A 220-amino-acid chain; its full sequence is UPF0502 protein VVA1225 (220 aa).

It belongs to the UPF0502 family.

The polypeptide is UPF0502 protein VVA1225 (Vibrio vulnificus (strain YJ016)).